Reading from the N-terminus, the 491-residue chain is MSKYQINCIRYRHFLRTSNISQIPDFTKYCIGPVNEELAPYIMETMKAYPSNSEYINPQHYYHNRTVLVENYLKRSPNPVSLTQLAQYYDDSTKLTRTKIINSGKFVKEELVIRIAHKLNQLQQLPFNVVNNFHFVQVYESYYNIFESFRKYPTIRTLEDASQFADFIKNMLEGFNTLNLPHLIMGALECTILDLYPREKMDQLLSDLLRARISRRLIVEEHVSITANYTSGKEENTLVLGDIFQECSAKKYLLEASEESQKFIQDMYFKDIPMPEFIIEGDTQLSFYFLPTHLKYLLGEILRNTYEATMKHYIRKGLEKPEPIIVTVVSNDESYLFRISDKAGGVLHDDENLWSFGKSKERAQESLNNFHKLPGLQTVSIYDEVHSHTKYNSKLKSLQSITLKPYMHTSLEPMSYPSIINGHIKYETPLIELLKRSFRYKLGIGLAMCKVYAEYWNGDLSLHSMPGYGTDVVLKLGNLMKHTKKLQLDKV.

The Histidine kinase domain occupies 153-480 (PTIRTLEDAS…DVVLKLGNLM (328 aa)). ATP-binding positions include 300–307 (EILRNTYE), Asp341, 359–360 (SK), and 383–446 (DEVH…GIGL).

This sequence belongs to the PDK/BCKDK protein kinase family. As to quaternary structure, interacts with PKP1.

Its subcellular location is the mitochondrion matrix. It carries out the reaction L-seryl-[pyruvate dehydrogenase E1 alpha subunit] + ATP = O-phospho-L-seryl-[pyruvate dehydrogenase E1 alpha subunit] + ADP + H(+). Functionally, inhibits the mitochondrial pyruvate dehydrogenase complex by phosphorylation of the E1 alpha subunit (PDA1), thus contributing to the regulation of glucose metabolism. The sequence is that of [Pyruvate dehydrogenase (acetyl-transferring)] kinase 2, mitochondrial from Saccharomyces cerevisiae (strain ATCC 204508 / S288c) (Baker's yeast).